Consider the following 358-residue polypeptide: S-adenosylmethionine:tRNA ribosyltransferase-isomerase (358 aa).

This sequence belongs to the QueA family. Monomer.

Its subcellular location is the cytoplasm. It carries out the reaction 7-aminomethyl-7-carbaguanosine(34) in tRNA + S-adenosyl-L-methionine = epoxyqueuosine(34) in tRNA + adenine + L-methionine + 2 H(+). It functions in the pathway tRNA modification; tRNA-queuosine biosynthesis. Its function is as follows. Transfers and isomerizes the ribose moiety from AdoMet to the 7-aminomethyl group of 7-deazaguanine (preQ1-tRNA) to give epoxyqueuosine (oQ-tRNA). The chain is S-adenosylmethionine:tRNA ribosyltransferase-isomerase from Rhodopseudomonas palustris (strain BisA53).